Consider the following 122-residue polypeptide: Large ribosomal subunit protein uL14 (122 aa).

Belongs to the universal ribosomal protein uL14 family. Part of the 50S ribosomal subunit. Forms a cluster with proteins L3 and L19. In the 70S ribosome, L14 and L19 interact and together make contacts with the 16S rRNA in bridges B5 and B8.

Functionally, binds to 23S rRNA. Forms part of two intersubunit bridges in the 70S ribosome. The sequence is that of Large ribosomal subunit protein uL14 from Colwellia psychrerythraea (strain 34H / ATCC BAA-681) (Vibrio psychroerythus).